A 422-amino-acid chain; its full sequence is 3-isopropylmalate dehydratase large subunit (422 aa).

The [4Fe-4S] cluster site is built by Cys294, Cys354, and Cys357.

This sequence belongs to the aconitase/IPM isomerase family. LeuC type 2 subfamily. Heterodimer of LeuC and LeuD. [4Fe-4S] cluster is required as a cofactor.

The enzyme catalyses (2R,3S)-3-isopropylmalate = (2S)-2-isopropylmalate. It participates in amino-acid biosynthesis; L-leucine biosynthesis; L-leucine from 3-methyl-2-oxobutanoate: step 2/4. In terms of biological role, catalyzes the isomerization between 2-isopropylmalate and 3-isopropylmalate, via the formation of 2-isopropylmaleate. This is 3-isopropylmalate dehydratase large subunit from Mycolicibacterium smegmatis (strain ATCC 700084 / mc(2)155) (Mycobacterium smegmatis).